The sequence spans 457 residues: Transmembrane protein 143 (457 aa).

Helical transmembrane passes span isoleucine 264 to valine 284 and leucine 285 to leucine 305. Serine 316 bears the Phosphoserine mark. The span at leucine 429–aspartate 439 shows a compositional bias: polar residues. The segment at leucine 429–asparagine 457 is disordered.

The protein resides in the membrane. The chain is Transmembrane protein 143 (TMEM143) from Bos taurus (Bovine).